The sequence spans 502 residues: Maturase K (502 aa).

The protein belongs to the intron maturase 2 family. MatK subfamily.

It is found in the plastid. Its subcellular location is the chloroplast. Its function is as follows. Usually encoded in the trnK tRNA gene intron. Probably assists in splicing its own and other chloroplast group II introns. This chain is Maturase K, found in Tilia americana (American basswood).